The primary structure comprises 388 residues: Chorismate synthase (388 aa).

Residues R39 and R45 each contribute to the NADP(+) site. The segment at 95-118 is disordered; that stretch reads EKNEKSRRVSRPRPGHADLVGGMK. FMN is bound by residues 130–132, 251–252, G296, 311–315, and R337; these read RSS, NA, and KPIPT.

The protein belongs to the chorismate synthase family. Homotetramer. It depends on FMNH2 as a cofactor.

It carries out the reaction 5-O-(1-carboxyvinyl)-3-phosphoshikimate = chorismate + phosphate. The protein operates within metabolic intermediate biosynthesis; chorismate biosynthesis; chorismate from D-erythrose 4-phosphate and phosphoenolpyruvate: step 7/7. Its function is as follows. Catalyzes the anti-1,4-elimination of the C-3 phosphate and the C-6 proR hydrogen from 5-enolpyruvylshikimate-3-phosphate (EPSP) to yield chorismate, which is the branch point compound that serves as the starting substrate for the three terminal pathways of aromatic amino acid biosynthesis. This reaction introduces a second double bond into the aromatic ring system. The polypeptide is Chorismate synthase (Listeria welshimeri serovar 6b (strain ATCC 35897 / DSM 20650 / CCUG 15529 / CIP 8149 / NCTC 11857 / SLCC 5334 / V8)).